The chain runs to 487 residues: Glutamyl-tRNA(Gln) amidotransferase subunit A (487 aa).

Active-site charge relay system residues include Lys-77 and Ser-152. Ser-176 serves as the catalytic Acyl-ester intermediate.

It belongs to the amidase family. GatA subfamily. In terms of assembly, heterotrimer of A, B and C subunits.

It catalyses the reaction L-glutamyl-tRNA(Gln) + L-glutamine + ATP + H2O = L-glutaminyl-tRNA(Gln) + L-glutamate + ADP + phosphate + H(+). In terms of biological role, allows the formation of correctly charged Gln-tRNA(Gln) through the transamidation of misacylated Glu-tRNA(Gln) in organisms which lack glutaminyl-tRNA synthetase. The reaction takes place in the presence of glutamine and ATP through an activated gamma-phospho-Glu-tRNA(Gln). The chain is Glutamyl-tRNA(Gln) amidotransferase subunit A from Lysinibacillus sphaericus (strain C3-41).